The chain runs to 148 residues: Gag-Pol polyprotein (148 aa).

Residues 1–64 (IPYNPQSQGV…SAGERIIDII (64 aa)) form the Integrase catalytic domain. Residue Glu12 participates in Mg(2+) binding. Residues 83–130 (FRVYYRDSRDPIWKGPAKLLWKGEGAVVIQDNSDIKVVPRRKVKIIRD) constitute a DNA-binding region (integrase-type).

Homotetramer; may further associate as a homohexadecamer. Part of the pre-integration complex (PIC) which is composed of viral genome, matrix protein, Vpr and integrase. Interacts with human SMARCB1/INI1 and human PSIP1/LEDGF isoform 1. Interacts with human KPNA3; this interaction might play a role in nuclear import of the pre-integration complex. Interacts with human NUP153; this interaction might play a role in nuclear import of the pre-integration complex. Specific enzymatic cleavages by the viral protease yield mature proteins.

Functionally, catalyzes viral DNA integration into the host chromosome, by performing a series of DNA cutting and joining reactions. This enzyme activity takes place after virion entry into a cell and reverse transcription of the RNA genome in dsDNA. The first step in the integration process is 3' processing. This step requires a complex comprising the viral genome, matrix protein, Vpr and integrase. This complex is called the pre-integration complex (PIC). The integrase protein removes 2 nucleotides from each 3' end of the viral DNA, leaving recessed CA OH's at the 3' ends. In the second step, the PIC enters cell nucleus. This process is mediated through integrase and Vpr proteins, and allows the virus to infect a non dividing cell. This ability to enter the nucleus is specific of lentiviruses, other retroviruses cannot and rely on cell division to access cell chromosomes. In the third step, termed strand transfer, the integrase protein joins the previously processed 3' ends to the 5' ends of strands of target cellular DNA at the site of integration. The 5'-ends are produced by integrase-catalyzed staggered cuts, 5 bp apart. A Y-shaped, gapped, recombination intermediate results, with the 5'-ends of the viral DNA strands and the 3' ends of target DNA strands remaining unjoined, flanking a gap of 5 bp. The last step is viral DNA integration into host chromosome. This involves host DNA repair synthesis in which the 5 bp gaps between the unjoined strands are filled in and then ligated. Since this process occurs at both cuts flanking the HIV genome, a 5 bp duplication of host DNA is produced at the ends of HIV-1 integration. Alternatively, Integrase may catalyze the excision of viral DNA just after strand transfer, this is termed disintegration. The polypeptide is Gag-Pol polyprotein (gag-pol) (Homo sapiens (Human)).